A 132-amino-acid chain; its full sequence is Fatty acid-binding protein, intestinal (132 aa).

Residue alanine 2 is modified to N-acetylalanine. 2 residues coordinate hexadecanoate: tryptophan 83 and arginine 107. 2 residues coordinate tetradecanoate: tryptophan 83 and arginine 107.

This sequence belongs to the calycin superfamily. Fatty-acid binding protein (FABP) family.

It localises to the cytoplasm. Functionally, FABPs are thought to play a role in the intracellular transport of long-chain fatty acids and their acyl-CoA esters. The polypeptide is Fatty acid-binding protein, intestinal (fabp2) (Xenopus laevis (African clawed frog)).